The sequence spans 333 residues: Diaminopimelate epimerase (333 aa).

Asn-24 and Asn-79 together coordinate substrate. Cys-88 serves as the catalytic Proton donor. Residues 89–90, Asn-176, Asn-210, and 228–229 each bind substrate; these read GN and ER. The active-site Proton acceptor is Cys-237. 238-239 contacts substrate; it reads GT.

The protein belongs to the diaminopimelate epimerase family. As to quaternary structure, homodimer.

It is found in the cytoplasm. It carries out the reaction (2S,6S)-2,6-diaminopimelate = meso-2,6-diaminopimelate. It functions in the pathway amino-acid biosynthesis; L-lysine biosynthesis via DAP pathway; DL-2,6-diaminopimelate from LL-2,6-diaminopimelate: step 1/1. Catalyzes the stereoinversion of LL-2,6-diaminopimelate (L,L-DAP) to meso-diaminopimelate (meso-DAP), a precursor of L-lysine and an essential component of the bacterial peptidoglycan. The protein is Diaminopimelate epimerase of Clostridium acetobutylicum (strain ATCC 824 / DSM 792 / JCM 1419 / IAM 19013 / LMG 5710 / NBRC 13948 / NRRL B-527 / VKM B-1787 / 2291 / W).